Consider the following 248-residue polypeptide: Adenylate kinase isoenzyme 6 homolog HBR1 (248 aa).

Residues Gly19, Gly21, Lys22, Ser23, and Ser24 each contribute to the ATP site. An NMPbind region spans residues 49 to 72; it reads NISEIAKERDCIESYDAKLDTSIV. The LID stretch occupies residues 124–134; the sequence is TRNYNDLKLQE. Arg125 serves as a coordination point for ATP. The interval 188–248 is disordered; that stretch reads DGVSNELNKQ…EMEHTEDIAQ (61 aa). The segment covering 202–238 has biased composition (acidic residues); sequence DSSDEGDDNSDSDEYELEEDEQEEEEEREEYDEETNE. Positions 239–248 are enriched in basic and acidic residues; the sequence is EMEHTEDIAQ.

Belongs to the adenylate kinase family. AK6 subfamily. In terms of assembly, interacts with small ribosomal subunit protein uS11. Not a structural component of 43S pre-ribosomes, but transiently interacts with them by binding to uS11.

Its subcellular location is the cytoplasm. The protein resides in the nucleus. It catalyses the reaction AMP + ATP = 2 ADP. It carries out the reaction ATP + H2O = ADP + phosphate + H(+). Functionally, broad-specificity nucleoside monophosphate (NMP) kinase that catalyzes the reversible transfer of the terminal phosphate group between nucleoside triphosphates and monophosphates. Also has ATPase activity. Involved in the late cytoplasmic maturation steps of the 40S ribosomal particles, specifically 18S rRNA maturation. While NMP activity is not required for ribosome maturation, ATPase activity is. Associates transiently with small ribosomal subunit protein uS11. ATP hydrolysis breaks the interaction with uS11. May temporarily remove uS11 from the ribosome to enable a conformational change of the ribosomal RNA that is needed for the final maturation step of the small ribosomal subunit. Its NMP activity may have a role in nuclear energy homeostasis. Induces transcription of mating-type proteins ALPHA1 and ALPHA2 and moderately represses transcription of mating-type protein A1 in response to hemoglobin and growth signals. Involved in the induction of a high affinity fibronectin receptor by sub-inhibitory dosages of caspofungin. The sequence is that of Adenylate kinase isoenzyme 6 homolog HBR1 (HBR1) from Candida albicans (strain SC5314 / ATCC MYA-2876) (Yeast).